Consider the following 232-residue polypeptide: Ubiquinone biosynthesis O-methyltransferase (232 aa).

S-adenosyl-L-methionine contacts are provided by Arg36, Gly55, Asp76, and Met120.

Belongs to the methyltransferase superfamily. UbiG/COQ3 family.

It carries out the reaction a 3-demethylubiquinol + S-adenosyl-L-methionine = a ubiquinol + S-adenosyl-L-homocysteine + H(+). The catalysed reaction is a 3-(all-trans-polyprenyl)benzene-1,2-diol + S-adenosyl-L-methionine = a 2-methoxy-6-(all-trans-polyprenyl)phenol + S-adenosyl-L-homocysteine + H(+). The protein operates within cofactor biosynthesis; ubiquinone biosynthesis. Functionally, O-methyltransferase that catalyzes the 2 O-methylation steps in the ubiquinone biosynthetic pathway. This is Ubiquinone biosynthesis O-methyltransferase from Burkholderia cenocepacia (strain ATCC BAA-245 / DSM 16553 / LMG 16656 / NCTC 13227 / J2315 / CF5610) (Burkholderia cepacia (strain J2315)).